Reading from the N-terminus, the 382-residue chain is Cell division protein FtsZ (382 aa).

GTP contacts are provided by residues 21 to 25, 108 to 110, Glu-139, Arg-143, and Asp-187; these read GGGNN and GTG. The segment at 320–382 is disordered; that stretch reads KDVTKPQRPS…TFLRNRNKRG (63 aa). Residues 326-341 show a composition bias toward polar residues; it reads QRPSLNQSIKTHNQSV. A compositionally biased stretch (basic and acidic residues) spans 342–351; the sequence is PKREPKREEP. Over residues 352–365 the composition is skewed to polar residues; that stretch reads QQQNTVSRHTSQPA.

It belongs to the FtsZ family. Homodimer. Polymerizes to form a dynamic ring structure in a strictly GTP-dependent manner. Interacts directly with several other division proteins. Interacts with FtsA. Interacts with Phi29 DNA replication protein 1. Interacts with the cell division inhibitor MciZ.

The protein resides in the cytoplasm. With respect to regulation, during sporulation, is negatively regulated by MciZ, which binds to FtsZ and inhibits its polymerization and the formation of the Z ring. Its function is as follows. Essential cell division protein that forms a contractile ring structure (Z ring) at the future cell division site. The regulation of the ring assembly controls the timing and the location of cell division. One of the functions of the FtsZ ring is to recruit other cell division proteins to the septum to produce a new cell wall between the dividing cells. Binds GTP and shows GTPase activity. The sequence is that of Cell division protein FtsZ from Bacillus subtilis (strain 168).